Consider the following 338-residue polypeptide: MANRANRHAARTEDSDNTINYVQCDGLAVMKMVKHCHEESSNMDLAQGALLGLVVDKCLEITNCFPFPKSGDETMDEELYQLTVMRRLRRVNVDHLHVGWYQSSDVGNSLSLALLESQYHYQTSIEESVVVVYDTQKSSRGFLCLKAYRLTPQAIQMYKDGDFTPEAFRTLKVGYESLFAEIPIVIKNSPLTNIMMSELNELLPEDKGHNFLDLGTATVLENQMRSLIERVDELYQEAVRYNKYQQVVFKQDTEKHRALAKLAAENAVRTSKGEPTVPEEEVIKQFRPMTAPNRLTATITSGQINTHAQHIAQFCSQSLAKLFITESLQNAKEAKETK.

Residues 22 to 154 enclose the MPN domain; that stretch reads VQCDGLAVMK…LKAYRLTPQA (133 aa).

The protein belongs to the eIF-3 subunit H family. In terms of assembly, component of the eukaryotic translation initiation factor 3 (eIF-3) complex. The eIF-3 complex interacts with pix. Interacts with mxt.

The protein resides in the cytoplasm. Its function is as follows. Component of the eukaryotic translation initiation factor 3 (eIF-3) complex, which is involved in protein synthesis of a specialized repertoire of mRNAs and, together with other initiation factors, stimulates binding of mRNA and methionyl-tRNAi to the 40S ribosome. The eIF-3 complex specifically targets and initiates translation of a subset of mRNAs involved in cell proliferation. The polypeptide is Eukaryotic translation initiation factor 3 subunit H (Drosophila erecta (Fruit fly)).